Consider the following 183-residue polypeptide: Large ribosomal subunit protein uL6 (183 aa).

This sequence belongs to the universal ribosomal protein uL6 family. In terms of assembly, part of the 50S ribosomal subunit.

In terms of biological role, this protein binds to the 23S rRNA, and is important in its secondary structure. It is located near the subunit interface in the base of the L7/L12 stalk, and near the tRNA binding site of the peptidyltransferase center. This Chlamydia trachomatis serovar D (strain ATCC VR-885 / DSM 19411 / UW-3/Cx) protein is Large ribosomal subunit protein uL6.